We begin with the raw amino-acid sequence, 216 residues long: 3-keto-L-gulonate-6-phosphate decarboxylase UlaD (216 aa).

Aspartate 11 is a binding site for substrate. Positions 33 and 62 each coordinate Mg(2+). Arginine 192 contributes to the substrate binding site.

It belongs to the HPS/KGPDC family. KGPDC subfamily. In terms of assembly, homodimer. Mg(2+) is required as a cofactor.

It carries out the reaction 3-dehydro-L-gulonate 6-phosphate + H(+) = L-xylulose 5-phosphate + CO2. Its pathway is cofactor degradation; L-ascorbate degradation; D-xylulose 5-phosphate from L-ascorbate: step 2/4. Its function is as follows. Catalyzes the decarboxylation of 3-keto-L-gulonate-6-P into L-xylulose-5-P. Is involved in the anaerobic L-ascorbate utilization. This Salmonella choleraesuis (strain SC-B67) protein is 3-keto-L-gulonate-6-phosphate decarboxylase UlaD.